A 20-amino-acid polypeptide reads, in one-letter code: Thylakoid lumenal 14.7 kDa protein (20 aa).

A disordered region spans residues 1-20; the sequence is KTGVNKPELLPKEETTVIDV. Over residues 9–20 the composition is skewed to basic and acidic residues; that stretch reads LLPKEETTVIDV.

The protein resides in the plastid. It is found in the chloroplast thylakoid lumen. The polypeptide is Thylakoid lumenal 14.7 kDa protein (Spinacia oleracea (Spinach)).